The chain runs to 468 residues: Probable Xaa-Pro aminopeptidase PEPP (468 aa).

Residues Asp264, Asp275, Glu398, and Glu438 each coordinate Mn(2+).

It belongs to the peptidase M24B family. Mn(2+) is required as a cofactor.

It carries out the reaction Release of any N-terminal amino acid, including proline, that is linked to proline, even from a dipeptide or tripeptide.. Functionally, catalyzes the removal of a penultimate prolyl residue from the N-termini of peptides. The sequence is that of Probable Xaa-Pro aminopeptidase PEPP (PEPP) from Paracoccidioides brasiliensis (strain Pb18).